The following is an 80-amino-acid chain: UPF0125 protein PD_1376 (80 aa).

It belongs to the UPF0125 (RnfH) family.

In Xylella fastidiosa (strain Temecula1 / ATCC 700964), this protein is UPF0125 protein PD_1376.